The chain runs to 520 residues: Hydroxymethylglutaryl-CoA synthase, cytoplasmic (520 aa).

Serine 4 carries the phosphoserine modification. Residues aspartate 43 and alanine 44 each contribute to the (3S)-3-hydroxy-3-methylglutaryl-CoA site. 44–46 (AGK) is a binding site for CoA. The residue at position 46 (lysine 46) is an N6-acetyllysine. Catalysis depends on glutamate 95, which acts as the Proton donor/acceptor. The (3S)-3-hydroxy-3-methylglutaryl-CoA site is built by cysteine 129, asparagine 167, threonine 171, serine 221, and histidine 264. Cysteine 129 (acyl-thioester intermediate) is an active-site residue. Asparagine 167 provides a ligand contact to CoA. Serine 221 is a binding site for CoA. Catalysis depends on histidine 264, which acts as the Proton donor/acceptor. CoA contacts are provided by lysine 269 and lysine 273. Residues lysine 273, asparagine 343, and serine 377 each coordinate (3S)-3-hydroxy-3-methylglutaryl-CoA. Residue lysine 273 is modified to N6-acetyllysine. Position 476 is a phosphothreonine (threonine 476). Residues 492-520 (HIPSPAKKVPRLPATAAEPEAAVISNGEH) form a disordered region. A phosphoserine mark is found at serine 495 and serine 516.

Belongs to the thiolase-like superfamily. HMG-CoA synthase family. Homodimer.

It localises to the cytoplasm. It carries out the reaction acetoacetyl-CoA + acetyl-CoA + H2O = (3S)-3-hydroxy-3-methylglutaryl-CoA + CoA + H(+). It participates in metabolic intermediate biosynthesis; (R)-mevalonate biosynthesis; (R)-mevalonate from acetyl-CoA: step 2/3. Catalyzes the condensation of acetyl-CoA with acetoacetyl-CoA to form HMG-CoA, which is converted by HMG-CoA reductase (HMGCR) into mevalonate, a precursor for cholesterol synthesis. The chain is Hydroxymethylglutaryl-CoA synthase, cytoplasmic from Homo sapiens (Human).